A 221-amino-acid polypeptide reads, in one-letter code: MDYRNQSLGALAIAIPRATKLFRQHQLDFCCGGKQTLLRAANKLNLDIDALEAQLSALQTEPHSSEDWQQQPLTNLISFIISRYHDRHREQLPELVLMAEKVERVHGDKPTCPRGLAAELSAILEELTQHMYKEEQILFPMIQRGMGSQASGPIFVMEAEHDAVGQQLDVVKQLTQNVTPPEGACNTWRALYTGINEFITDLMEHIHLENNLLFPRALRGE.

Belongs to the RIC family. YtfE subfamily. As to quaternary structure, homodimer.

It localises to the cytoplasm. Functionally, di-iron-containing protein involved in the repair of iron-sulfur clusters damaged by oxidative and nitrosative stress conditions. This is Iron-sulfur cluster repair protein YtfE from Yersinia pseudotuberculosis serotype O:1b (strain IP 31758).